The chain runs to 279 residues: Phosphate-binding protein PstS (279 aa).

The first 18 residues, 1–18, serve as a signal peptide directing secretion; the sequence is MKKVIILIFMLSTSLLYN. Residue Cys19 is the site of N-palmitoyl cysteine attachment. The S-diacylglycerol cysteine moiety is linked to residue Cys19. Residues 33-35, Ser63, and 151-153 contribute to the phosphate site; these read STT and SGS.

Belongs to the PstS family. As to quaternary structure, monomer (in vitro). The complex is composed of two ATP-binding proteins (PstB), two transmembrane proteins (PstC and PstA) and a solute-binding protein (PstS).

Its subcellular location is the cell membrane. In terms of biological role, binds inorganic phosphate with a Kd of 1.2 uM. Part of the ABC transporter complex PstSACB involved in phosphate import. The protein is Phosphate-binding protein PstS of Borreliella burgdorferi (strain ATCC 35210 / DSM 4680 / CIP 102532 / B31) (Borrelia burgdorferi).